Reading from the N-terminus, the 63-residue chain is uncharacterized protein (63 aa).

This is an uncharacterized protein from Homo sapiens (Human).